The sequence spans 395 residues: Argininosuccinate synthase (395 aa).

Residue 7–15 (LYSGGLDTS) participates in ATP binding. Tyr83 lines the L-citrulline pocket. Gly113 provides a ligand contact to ATP. Residues Thr115, Asn119, and Asp120 each coordinate L-aspartate. L-citrulline is bound at residue Asn119. L-citrulline contacts are provided by Arg123, Ser169, Ser178, Glu253, and Tyr265.

This sequence belongs to the argininosuccinate synthase family. Type 1 subfamily. Homotetramer.

It is found in the cytoplasm. It catalyses the reaction L-citrulline + L-aspartate + ATP = 2-(N(omega)-L-arginino)succinate + AMP + diphosphate + H(+). The protein operates within amino-acid biosynthesis; L-arginine biosynthesis; L-arginine from L-ornithine and carbamoyl phosphate: step 2/3. The polypeptide is Argininosuccinate synthase (Picrophilus torridus (strain ATCC 700027 / DSM 9790 / JCM 10055 / NBRC 100828 / KAW 2/3)).